Reading from the N-terminus, the 225-residue chain is 3-dehydroquinate dehydratase (225 aa).

3-dehydroquinate is bound by residues Ser6, 30-32, and Arg62; that span reads EWR. Residue His118 is the Proton donor/acceptor of the active site. Lys143 acts as the Schiff-base intermediate with substrate in catalysis. The 3-dehydroquinate site is built by Arg186, Ser205, and Gln209.

This sequence belongs to the type-I 3-dehydroquinase family. In terms of assembly, homodimer.

The catalysed reaction is 3-dehydroquinate = 3-dehydroshikimate + H2O. It participates in metabolic intermediate biosynthesis; chorismate biosynthesis; chorismate from D-erythrose 4-phosphate and phosphoenolpyruvate: step 3/7. Functionally, involved in the third step of the chorismate pathway, which leads to the biosynthesis of aromatic amino acids. Catalyzes the cis-dehydration of 3-dehydroquinate (DHQ) and introduces the first double bond of the aromatic ring to yield 3-dehydroshikimate. The sequence is that of 3-dehydroquinate dehydratase from Streptococcus pneumoniae (strain ATCC 700669 / Spain 23F-1).